Reading from the N-terminus, the 191-residue chain is Protein adenylyltransferase NmFic (191 aa).

Positions 37–162 (GTTAGLQQIH…NDLELRFLLK (126 aa)) constitute a Fido domain. ATP is bound by residues lysine 67, 104–107 (NIAH), 112–118 (GNGRSTR), and 140–143 (KTLY). Positions 182 to 187 (SYYYEG) match the Inhibitory (S/T)XXXE(G/N) motif motif. Tyrosine 183 carries the O-AMP-tyrosine; in vitro modification. Glutamate 186 is a binding site for ATP.

In terms of assembly, homodimer. Auto-AMPylation at Tyr-183 in vitro.

It catalyses the reaction L-tyrosyl-[protein] + ATP = O-(5'-adenylyl)-L-tyrosyl-[protein] + diphosphate. The catalysed reaction is L-threonyl-[protein] + ATP = 3-O-(5'-adenylyl)-L-threonyl-[protein] + diphosphate. With respect to regulation, adenylyltransferase activity is inhibited by the inhibitory helix present at the C-terminus: Glu-186 binds ATP and competes with ATP-binding at Arg-118, thereby preventing adenylyltransferase activity. Activation dissociates ATP-binding from Glu-186, allowing ordered binding of the entire ATP moiety with the alpha-phosphate in an orientation that is productive for accepting an incoming target hydroxyl side chain. Adenylyltransferase that mediates the addition of adenosine 5'-monophosphate (AMP) to specific residues of target proteins. This Neisseria meningitidis serogroup B (strain ATCC BAA-335 / MC58) protein is Protein adenylyltransferase NmFic.